Consider the following 163-residue polypeptide: UPF0763 protein JJD26997_0796 (163 aa).

The protein belongs to the UPF0763 family.

This is UPF0763 protein JJD26997_0796 from Campylobacter jejuni subsp. doylei (strain ATCC BAA-1458 / RM4099 / 269.97).